Reading from the N-terminus, the 66-residue chain is Large ribosomal subunit protein uL29 (66 aa).

Belongs to the universal ribosomal protein uL29 family.

This Thermococcus onnurineus (strain NA1) protein is Large ribosomal subunit protein uL29.